A 184-amino-acid polypeptide reads, in one-letter code: dCTP deaminase (184 aa).

107–112 (KSTYAR) lines the dCTP pocket. The active-site Proton donor/acceptor is the Glu133. DCTP-binding residues include Gln152, Tyr166, and Gln176.

This sequence belongs to the dCTP deaminase family. Homotrimer.

It catalyses the reaction dCTP + H2O + H(+) = dUTP + NH4(+). It functions in the pathway pyrimidine metabolism; dUMP biosynthesis; dUMP from dCTP (dUTP route): step 1/2. Its function is as follows. Catalyzes the deamination of dCTP to dUTP. The chain is dCTP deaminase from Acidiphilium cryptum (strain JF-5).